Here is a 313-residue protein sequence, read N- to C-terminus: tRNA-cytidine(32) 2-sulfurtransferase (313 aa).

The short motif at 47 to 52 (SGGKDS) is the PP-loop motif element. Residues Cys122, Cys125, and Cys213 each coordinate [4Fe-4S] cluster.

The protein belongs to the TtcA family. In terms of assembly, homodimer. It depends on Mg(2+) as a cofactor. [4Fe-4S] cluster serves as cofactor.

Its subcellular location is the cytoplasm. It carries out the reaction cytidine(32) in tRNA + S-sulfanyl-L-cysteinyl-[cysteine desulfurase] + AH2 + ATP = 2-thiocytidine(32) in tRNA + L-cysteinyl-[cysteine desulfurase] + A + AMP + diphosphate + H(+). The protein operates within tRNA modification. Its function is as follows. Catalyzes the ATP-dependent 2-thiolation of cytidine in position 32 of tRNA, to form 2-thiocytidine (s(2)C32). The sulfur atoms are provided by the cysteine/cysteine desulfurase (IscS) system. The protein is tRNA-cytidine(32) 2-sulfurtransferase of Yersinia pseudotuberculosis serotype IB (strain PB1/+).